The sequence spans 688 residues: Elongation factor G (688 aa).

Residues 8–282 (DKFRNFGIMA…GVVDYLPSPL (275 aa)) form the tr-type G domain. GTP contacts are provided by residues 17–24 (AHIDAGKT), 81–85 (DTPGH), and 135–138 (NKMD).

The protein belongs to the TRAFAC class translation factor GTPase superfamily. Classic translation factor GTPase family. EF-G/EF-2 subfamily.

It is found in the cytoplasm. Its function is as follows. Catalyzes the GTP-dependent ribosomal translocation step during translation elongation. During this step, the ribosome changes from the pre-translocational (PRE) to the post-translocational (POST) state as the newly formed A-site-bound peptidyl-tRNA and P-site-bound deacylated tRNA move to the P and E sites, respectively. Catalyzes the coordinated movement of the two tRNA molecules, the mRNA and conformational changes in the ribosome. The protein is Elongation factor G of Clostridium botulinum (strain Alaska E43 / Type E3).